The following is a 727-amino-acid chain: NADH-ubiquinone oxidoreductase 75 kDa subunit, mitochondrial (727 aa).

The transit peptide at M1–T23 directs the protein to the mitochondrion. Positions N30–K108 constitute a 2Fe-2S ferredoxin-type domain. Residues C64, C75, and C78 each contribute to the [2Fe-2S] cluster site. N6-acetyllysine is present on K84. C92 lines the [2Fe-2S] cluster pocket. Residues K108–G147 enclose the 4Fe-4S His(Cys)3-ligated-type domain. [4Fe-4S] cluster is bound by residues H124, C128, C131, C137, C176, C179, C182, and C226. One can recognise a 4Fe-4S Mo/W bis-MGD-type domain in the interval T245 to R301. An N6-acetyllysine mark is found at K467, K499, and K709.

Belongs to the complex I 75 kDa subunit family. As to quaternary structure, core subunit of respiratory chain NADH dehydrogenase (Complex I) which is composed of 45 different subunits. This is the largest subunit of complex I and it is a component of the iron-sulfur (IP) fragment of the enzyme. Complex I associates with ubiquinol-cytochrome reductase complex (Complex III) to form supercomplexes. Interacts with MDM2 and AKAP1. [2Fe-2S] cluster is required as a cofactor. Requires [4Fe-4S] cluster as cofactor.

The protein resides in the mitochondrion inner membrane. It carries out the reaction a ubiquinone + NADH + 5 H(+)(in) = a ubiquinol + NAD(+) + 4 H(+)(out). Functionally, core subunit of the mitochondrial membrane respiratory chain NADH dehydrogenase (Complex I) which catalyzes electron transfer from NADH through the respiratory chain, using ubiquinone as an electron acceptor. Essential for catalysing the entry and efficient transfer of electrons within complex I. Plays a key role in the assembly and stability of complex I and participates in the association of complex I with ubiquinol-cytochrome reductase complex (Complex III) to form supercomplexes. The chain is NADH-ubiquinone oxidoreductase 75 kDa subunit, mitochondrial (NDUFS1) from Macaca fascicularis (Crab-eating macaque).